The primary structure comprises 363 residues: NAD(P)H-quinone oxidoreductase subunit 1, chloroplastic (363 aa).

Helical transmembrane passes span 26-46 (FVWI…GVLV), 96-116 (WLFA…FLVI), 127-147 (ISIG…GLLV), 175-195 (LALC…IEIV), 203-223 (ILGW…ISAL), 253-273 (FGLF…FVTI), 303-323 (GLIA…ASIL), and 343-363 (FLLP…LALL).

Belongs to the complex I subunit 1 family. As to quaternary structure, NDH is composed of at least 16 different subunits, 5 of which are encoded in the nucleus.

The protein resides in the plastid. It is found in the chloroplast thylakoid membrane. The catalysed reaction is a plastoquinone + NADH + (n+1) H(+)(in) = a plastoquinol + NAD(+) + n H(+)(out). The enzyme catalyses a plastoquinone + NADPH + (n+1) H(+)(in) = a plastoquinol + NADP(+) + n H(+)(out). In terms of biological role, NDH shuttles electrons from NAD(P)H:plastoquinone, via FMN and iron-sulfur (Fe-S) centers, to quinones in the photosynthetic chain and possibly in a chloroplast respiratory chain. The immediate electron acceptor for the enzyme in this species is believed to be plastoquinone. Couples the redox reaction to proton translocation, and thus conserves the redox energy in a proton gradient. The chain is NAD(P)H-quinone oxidoreductase subunit 1, chloroplastic from Zygnema circumcarinatum (Green alga).